Consider the following 60-residue polypeptide: Large ribosomal subunit protein uL30 (60 aa).

The protein belongs to the universal ribosomal protein uL30 family. In terms of assembly, part of the 50S ribosomal subunit.

This chain is Large ribosomal subunit protein uL30, found in Sphingopyxis alaskensis (strain DSM 13593 / LMG 18877 / RB2256) (Sphingomonas alaskensis).